The sequence spans 155 residues: Class I hydrophobin C (155 aa).

The signal sequence occupies residues 1-22 (MLVTMRLSRSIAVFTLVTYATG). Intrachain disulfides connect cysteine 52/cysteine 129, cysteine 60/cysteine 123, cysteine 61/cysteine 101, and cysteine 130/cysteine 148.

Belongs to the fungal hydrophobin family. As to quaternary structure, self-assembles to form functional amyloid fibrils called rodlets. Self-assembly into fibrillar rodlets occurs spontaneously at hydrophobic:hydrophilic interfaces and the rodlets further associate laterally to form amphipathic monolayers.

It is found in the secreted. The protein resides in the spore wall. In terms of biological role, aerial growth, conidiation, and dispersal of filamentous fungi in the environment rely upon a capability of their secreting small amphipathic proteins called hydrophobins (HPBs) with low sequence identity. Class I can self-assemble into an outermost layer of rodlet bundles on aerial cell surfaces, conferring cellular hydrophobicity that supports fungal growth, development and dispersal; whereas Class II form highly ordered films at water-air interfaces through intermolecular interactions but contribute nothing to the rodlet structure. RodC is a class I hydrophobin that, unlike rodA, is not required for rodlet formation. This chain is Class I hydrophobin C, found in Aspergillus fumigatus (strain ATCC MYA-4609 / CBS 101355 / FGSC A1100 / Af293) (Neosartorya fumigata).